The chain runs to 190 residues: Dirigent protein 15 (190 aa).

The N-terminal stretch at Met-1–Ala-19 is a signal peptide. N-linked (GlcNAc...) asparagine glycans are attached at residues Asn-63 and Asn-128.

It belongs to the plant dirigent protein family. As to quaternary structure, homodimer.

It localises to the secreted. The protein localises to the extracellular space. It is found in the apoplast. Functionally, dirigent proteins impart stereoselectivity on the phenoxy radical-coupling reaction, yielding optically active lignans from two molecules of coniferyl alcohol in the biosynthesis of lignans, flavonolignans, and alkaloids and thus plays a central role in plant secondary metabolism. This is Dirigent protein 15 (DIR15) from Arabidopsis thaliana (Mouse-ear cress).